An 891-amino-acid chain; its full sequence is Fanconi-associated nuclease 1 homolog (891 aa).

Residues glutamate 712, aspartate 833, glutamate 852, and valine 853 each coordinate Mn(2+). Positions 770–884 constitute a VRR-NUC domain; the sequence is GMAEEILIIS…GFNVEICKVR (115 aa).

Belongs to the FAN1 family. Mn(2+) is required as a cofactor. It depends on Mg(2+) as a cofactor.

The protein resides in the nucleus. It carries out the reaction Hydrolytically removes 5'-nucleotides successively from the 3'-hydroxy termini of 3'-hydroxy-terminated oligonucleotides.. Nuclease required for the repair of DNA interstrand cross-links (ICLs). Acts as a 5'-3' exonuclease that anchors at a cut end of DNA and cleaves DNA successively at every third nucleotide, allowing to excise an ICL from one strand through flanking incisions. May act upstream of the helicase RECQL4A and the ATPase RAD5A, which is involved in error-free post-replicative repair. Functions independently of MUS81 pathway, but in a similar pathway with RECQ4A, RAD5A and MFH1 in ICL repair. The polypeptide is Fanconi-associated nuclease 1 homolog (Arabidopsis thaliana (Mouse-ear cress)).